A 319-amino-acid polypeptide reads, in one-letter code: Ribosomal protein uL3 glutamine methyltransferase (319 aa).

This sequence belongs to the protein N5-glutamine methyltransferase family. PrmB subfamily.

The enzyme catalyses L-glutaminyl-[ribosomal protein uL3] + S-adenosyl-L-methionine = N(5)-methyl-L-glutaminyl-[ribosomal protein uL3] + S-adenosyl-L-homocysteine + H(+). In terms of biological role, methylates large ribosomal subunit protein uL3 on a specific glutamine residue. The sequence is that of Ribosomal protein uL3 glutamine methyltransferase from Bradyrhizobium diazoefficiens (strain JCM 10833 / BCRC 13528 / IAM 13628 / NBRC 14792 / USDA 110).